The sequence spans 400 residues: Delta(12) fatty acid desaturase (400 aa).

Residues 91–111 (LAWPAYWIMQGIVCTGIWVLA) form a helical membrane-spanning segment. A Histidine box-1 motif is present at residues 112–116 (HECGH). The Histidine box-2 signature appears at 148-152 (HSKHH). Transmembrane regions (helical) follow at residues 199–219 (IVTL…YLIM), 245–265 (FFDI…LIYA), and 277–297 (YYIV…FLQH). The Histidine box-3 motif lies at 339–343 (HVAHH).

The protein belongs to the fatty acid desaturase type 1 family.

It is found in the membrane. The catalysed reaction is (9Z)-octadecenoyl-CoA + 2 Fe(II)-[cytochrome b5] + O2 + 2 H(+) = (9Z,12Z)-octadecadienoyl-CoA + 2 Fe(III)-[cytochrome b5] + 2 H2O. The enzyme catalyses (9Z)-hexadecenoyl-CoA + 2 Fe(II)-[cytochrome b5] + O2 + 2 H(+) = (9Z,12Z)-hexadecadienoyl-CoA + 2 Fe(III)-[cytochrome b5] + 2 H2O. Its pathway is lipid metabolism; polyunsaturated fatty acid biosynthesis. Catalyzes the desaturation of oleic acid (Delta(9)-18:1) to linoleic acid (Delta(9), Delta(12)-18:2). In Mortierella alpina (Oleaginous fungus), this protein is Delta(12) fatty acid desaturase.